The chain runs to 203 residues: NAD(P)H dehydrogenase (quinone) (203 aa).

A Flavodoxin-like domain is found at 3–194; the sequence is VLIPFYSMYG…AGARYQGKYI (192 aa). FMN contacts are provided by residues 9–14 and 82–84; these read SMYGHI and TRF. Y11 contributes to the NAD(+) binding site. Position 102 (W102) interacts with substrate. Residues 117–123 and H138 each bind FMN; that span reads SSATQHG.

The protein belongs to the WrbA family. Requires FMN as cofactor.

It catalyses the reaction a quinone + NADH + H(+) = a quinol + NAD(+). The catalysed reaction is a quinone + NADPH + H(+) = a quinol + NADP(+). This chain is NAD(P)H dehydrogenase (quinone), found in Geobacter metallireducens (strain ATCC 53774 / DSM 7210 / GS-15).